Consider the following 477-residue polypeptide: Aspartyl/glutamyl-tRNA(Asn/Gln) amidotransferase subunit B (477 aa).

The protein belongs to the GatB/GatE family. GatB subfamily. As to quaternary structure, heterotrimer of A, B and C subunits.

It carries out the reaction L-glutamyl-tRNA(Gln) + L-glutamine + ATP + H2O = L-glutaminyl-tRNA(Gln) + L-glutamate + ADP + phosphate + H(+). The catalysed reaction is L-aspartyl-tRNA(Asn) + L-glutamine + ATP + H2O = L-asparaginyl-tRNA(Asn) + L-glutamate + ADP + phosphate + 2 H(+). Its function is as follows. Allows the formation of correctly charged Asn-tRNA(Asn) or Gln-tRNA(Gln) through the transamidation of misacylated Asp-tRNA(Asn) or Glu-tRNA(Gln) in organisms which lack either or both of asparaginyl-tRNA or glutaminyl-tRNA synthetases. The reaction takes place in the presence of glutamine and ATP through an activated phospho-Asp-tRNA(Asn) or phospho-Glu-tRNA(Gln). The protein is Aspartyl/glutamyl-tRNA(Asn/Gln) amidotransferase subunit B of Coxiella burnetii (strain CbuG_Q212) (Coxiella burnetii (strain Q212)).